Here is a 122-residue protein sequence, read N- to C-terminus: Large ribosomal subunit protein uL14 (122 aa).

Belongs to the universal ribosomal protein uL14 family. In terms of assembly, part of the 50S ribosomal subunit. Forms a cluster with proteins L3 and L19. In the 70S ribosome, L14 and L19 interact and together make contacts with the 16S rRNA in bridges B5 and B8.

Its function is as follows. Binds to 23S rRNA. Forms part of two intersubunit bridges in the 70S ribosome. This chain is Large ribosomal subunit protein uL14, found in Myxococcus xanthus (strain DK1622).